The primary structure comprises 418 residues: 3-isopropylmalate dehydratase large subunit (418 aa).

The [4Fe-4S] cluster site is built by Cys298, Cys358, and Cys361.

Belongs to the aconitase/IPM isomerase family. LeuC type 2 subfamily. As to quaternary structure, heterodimer of LeuC and LeuD. Requires [4Fe-4S] cluster as cofactor.

The enzyme catalyses (2R,3S)-3-isopropylmalate = (2S)-2-isopropylmalate. Its pathway is amino-acid biosynthesis; L-leucine biosynthesis; L-leucine from 3-methyl-2-oxobutanoate: step 2/4. Functionally, catalyzes the isomerization between 2-isopropylmalate and 3-isopropylmalate, via the formation of 2-isopropylmaleate. This Thermoanaerobacter sp. (strain X514) protein is 3-isopropylmalate dehydratase large subunit.